The following is a 408-amino-acid chain: Arginine biosynthesis bifunctional protein ArgJ (408 aa).

The substrate site is built by threonine 156, lysine 182, threonine 193, glutamate 279, asparagine 403, and serine 408. Threonine 193 functions as the Nucleophile in the catalytic mechanism.

The protein belongs to the ArgJ family. Heterotetramer of two alpha and two beta chains.

Its subcellular location is the cytoplasm. It catalyses the reaction N(2)-acetyl-L-ornithine + L-glutamate = N-acetyl-L-glutamate + L-ornithine. It carries out the reaction L-glutamate + acetyl-CoA = N-acetyl-L-glutamate + CoA + H(+). The protein operates within amino-acid biosynthesis; L-arginine biosynthesis; L-ornithine and N-acetyl-L-glutamate from L-glutamate and N(2)-acetyl-L-ornithine (cyclic): step 1/1. It functions in the pathway amino-acid biosynthesis; L-arginine biosynthesis; N(2)-acetyl-L-ornithine from L-glutamate: step 1/4. Catalyzes two activities which are involved in the cyclic version of arginine biosynthesis: the synthesis of N-acetylglutamate from glutamate and acetyl-CoA as the acetyl donor, and of ornithine by transacetylation between N(2)-acetylornithine and glutamate. The protein is Arginine biosynthesis bifunctional protein ArgJ of Dechloromonas aromatica (strain RCB).